A 207-amino-acid polypeptide reads, in one-letter code: Putative transcriptional regulator (207 aa).

Residues 3 to 118 form the Response regulatory domain; that stretch reads KVLIVDDHPA…ELLLAAKAVL (116 aa). A 4-aspartylphosphate mark is found at aspartate 9 and aspartate 53. Residues 140 to 205 enclose the HTH luxR-type domain; the sequence is EARMLESLSD…GLIDFARRHE (66 aa). Residues 155 to 174 constitute a DNA-binding region (H-T-H motif); that stretch reads LQYLANGNTNKAIAQQLFLS.

Functionally, probable transcriptional regulator. The chain is Putative transcriptional regulator from Pseudomonas aeruginosa (strain ATCC 15692 / DSM 22644 / CIP 104116 / JCM 14847 / LMG 12228 / 1C / PRS 101 / PAO1).